The primary structure comprises 119 residues: Large ribosomal subunit protein uL22 (119 aa).

This sequence belongs to the universal ribosomal protein uL22 family. As to quaternary structure, part of the 50S ribosomal subunit.

Its function is as follows. This protein binds specifically to 23S rRNA; its binding is stimulated by other ribosomal proteins, e.g. L4, L17, and L20. It is important during the early stages of 50S assembly. It makes multiple contacts with different domains of the 23S rRNA in the assembled 50S subunit and ribosome. Functionally, the globular domain of the protein is located near the polypeptide exit tunnel on the outside of the subunit, while an extended beta-hairpin is found that lines the wall of the exit tunnel in the center of the 70S ribosome. This is Large ribosomal subunit protein uL22 from Pelodictyon phaeoclathratiforme (strain DSM 5477 / BU-1).